The following is a 66-amino-acid chain: Large ribosomal subunit protein bL35 (66 aa).

Positions 25–45 (QAAGKRHGMSKRPQKMKRNAR) are disordered. Residues 28–44 (GKRHGMSKRPQKMKRNA) show a composition bias toward basic residues.

Belongs to the bacterial ribosomal protein bL35 family.

The chain is Large ribosomal subunit protein bL35 from Rhodospirillum centenum (strain ATCC 51521 / SW).